Consider the following 110-residue polypeptide: UPF0473 protein SSP1146 (110 aa).

It belongs to the UPF0473 family.

The sequence is that of UPF0473 protein SSP1146 from Staphylococcus saprophyticus subsp. saprophyticus (strain ATCC 15305 / DSM 20229 / NCIMB 8711 / NCTC 7292 / S-41).